We begin with the raw amino-acid sequence, 1084 residues long: TNF receptor-associated factor family protein DDB_G0272098 (1084 aa).

The region spanning Tyr-19–Phe-103 is the LIM zinc-binding domain. 2 TRAF-type zinc fingers span residues Lys-122–Glu-190 and Ile-191–Ser-248. A coiled-coil region spans residues Ile-265–Ser-321. 4 disordered regions span residues Tyr-348–Glu-392, Ile-490–Ile-523, Asn-537–Leu-656, and Ser-709–Asp-897. Composition is skewed to low complexity over residues Lys-349–Asn-375, Gln-492–Gln-509, Asn-537–Lys-549, and Ile-556–Thr-570. The stretch at Leu-489–Asp-553 forms a coiled coil. Residues His-571–Ile-586 are compositionally biased toward polar residues. The segment covering Asn-587 to Thr-637 has biased composition (low complexity). Positions Thr-644–Leu-656 are enriched in basic and acidic residues. The stretch at Asn-735–Val-852 forms a coiled coil. The span at Asn-739–Asn-757 shows a compositional bias: acidic residues. Residues Ser-774–Thr-785 show a composition bias toward polar residues. The span at Glu-790 to Glu-799 shows a compositional bias: basic and acidic residues. The segment covering Asn-809–Asn-849 has biased composition (low complexity). Basic and acidic residues-rich tracts occupy residues Tyr-853–Val-864 and Glu-875–Lys-892. The region spanning Ile-909 to Val-1042 is the MATH domain. A disordered region spans residues Leu-1056–Arg-1084. A compositionally biased stretch (low complexity) spans Lys-1059–Arg-1084.

It belongs to the TNF receptor-associated factor family.

The protein localises to the cytoplasm. In terms of biological role, probable adapter protein and signal transducer that links members of the tumor necrosis factor receptor family to different signaling pathways by association with the receptor cytoplasmic domain and kinases. The chain is TNF receptor-associated factor family protein DDB_G0272098 from Dictyostelium discoideum (Social amoeba).